The primary structure comprises 95 residues: Signal recognition particle 19 kDa protein (95 aa).

It belongs to the SRP19 family. In terms of assembly, part of the signal recognition particle protein translocation system, which is composed of SRP and FtsY. Archaeal SRP consists of a 7S RNA molecule of 300 nucleotides and two protein subunits: SRP54 and SRP19.

It localises to the cytoplasm. Its function is as follows. Involved in targeting and insertion of nascent membrane proteins into the cytoplasmic membrane. Binds directly to 7S RNA and mediates binding of the 54 kDa subunit of the SRP. This Methanococcoides burtonii (strain DSM 6242 / NBRC 107633 / OCM 468 / ACE-M) protein is Signal recognition particle 19 kDa protein.